Here is a 230-residue protein sequence, read N- to C-terminus: Cutinase 1 (230 aa).

An N-terminal signal peptide occupies residues methionine 1 to alanine 16. The propeptide occupies leucine 17–leucine 31. At glycine 32 the chain carries N-D-glucuronoyl glycine. The cysteines at positions 47 and 125 are disulfide-linked. Serine 136 (nucleophile) is an active-site residue. A disulfide bond links cysteine 187 and cysteine 194. Residue aspartate 191 is part of the active site. Histidine 204 acts as the Proton donor/acceptor in catalysis.

This sequence belongs to the cutinase family. Post-translationally, the 2 disulfide bonds play a critical role in holding the catalytic residues in juxta-position; reduction of the disulfide bridges results in the complete inactivation of the enzyme. O-glycosylated; contains one mole each of mannose, arabinose, N-acetylglucosamine, and glucuronic acid.

The protein resides in the secreted. It catalyses the reaction cutin + H2O = cutin monomers.. Inhibited by n-undecyl phosphonate (C11Y4). Inhibited by paraoxon. Its function is as follows. Catalyzes the hydrolysis of complex carboxylic polyesters found in the cell wall of plants. Degrades cutin, a macromolecule that forms the structure of the plant cuticle. Allows pathogenic fungi to penetrate through the cuticular barrier into the host plant during the initial stage of fungal infection. This Fusarium vanettenii (Neocosmospora pisi) protein is Cutinase 1 (CUT1).